The primary structure comprises 344 residues: UDP-glycosyltransferase 73C4 (344 aa).

UDP-alpha-D-glucose contacts are provided by residues S145, 202–203, 220–228, and 242–245; these read WA, HCGWNSSLE, and FAEQ.

It belongs to the UDP-glycosyltransferase family. As to expression, expressed in flowers and fruits.

Its subcellular location is the cytoplasm. It localises to the nucleus. Its function is as follows. Probable glucosyltransferase that cannot glycosylate abscisic acid (ABA) and auxin (IAA). This is UDP-glycosyltransferase 73C4 from Solanum lycopersicum (Tomato).